Consider the following 62-residue polypeptide: U10-hottentoxin-Hj2a (62 aa).

Positions 1-22 (MQKLLIILILFCILKFNVDVEG) are cleaved as a signal peptide. Intrachain disulfides connect C28-C46, C33-C59, and C37-C61.

This sequence belongs to the short scorpion toxin superfamily. Potassium channel inhibitor family. Alpha-KTx 23 subfamily. Expressed by the venom gland.

The protein resides in the secreted. Its function is as follows. May block potassium channels. This Hottentotta judaicus (Black scorpion) protein is U10-hottentoxin-Hj2a.